The sequence spans 631 residues: Probable potassium transport system protein Kup (631 aa).

The next 12 helical transmembrane spans lie at 17-37 (IGLL…SPLY), 56-76 (ILGV…FKYM), 109-129 (MMMV…SMIT), 147-167 (GLDH…FLIQ), 174-194 (IGVL…ALGV), 215-235 (FFII…LALT), 256-276 (WFIL…ALVL), 288-308 (LLAP…ATII), 346-366 (IYIG…VIGF), 378-398 (VAVT…MLML), 403-423 (PLLA…FFAA), and 428-448 (IFQG…LMTT).

The protein belongs to the HAK/KUP transporter (TC 2.A.72) family.

It is found in the cell inner membrane. The catalysed reaction is K(+)(in) + H(+)(in) = K(+)(out) + H(+)(out). In terms of biological role, transport of potassium into the cell. Likely operates as a K(+):H(+) symporter. The sequence is that of Probable potassium transport system protein Kup from Pseudomonas syringae pv. tomato (strain ATCC BAA-871 / DC3000).